The sequence spans 74 residues: Brevinin-2Ef (74 aa).

The N-terminal stretch at 1–22 (MFTMKKSLLLIFFLGTISLSLC) is a signal peptide. Positions 23–41 (QEERNADDDDGEMTEEEKR) are excised as a propeptide. Cysteines 68 and 74 form a disulfide.

It belongs to the frog skin active peptide (FSAP) family. Brevinin subfamily. As to expression, expressed by the skin glands.

Its subcellular location is the secreted. In terms of biological role, shows antibacterial activity against representative Gram-negative and Gram-positive bacterial species, and hemolytic activity. This chain is Brevinin-2Ef, found in Pelophylax lessonae (Pool frog).